A 136-amino-acid chain; its full sequence is Large ribosomal subunit protein eL27 (136 aa).

The KOW domain occupies 5 to 40 (MKPGKVVLVLAGRYSGRKAVIVKNIDDGTSDRPYSH). Residues Lys27 and Lys93 each carry the N6-acetyllysine modification.

It belongs to the eukaryotic ribosomal protein eL27 family. As to quaternary structure, component of the large ribosomal subunit. Interacts with RRP1B. Component of the large ribosomal subunit. Interacts with RRP1B. Interacts with DHX33.

The protein resides in the cytoplasm. The protein localises to the cytosol. It localises to the rough endoplasmic reticulum. Component of the large ribosomal subunit. Required for proper rRNA processing and maturation of 28S and 5.8S rRNAs. This chain is Large ribosomal subunit protein eL27 (RPL27), found in Bos taurus (Bovine).